Consider the following 610-residue polypeptide: Glutamine--fructose-6-phosphate aminotransferase [isomerizing] (610 aa).

Cys-2 functions as the Nucleophile; for GATase activity in the catalytic mechanism. Residues 2-217 (CGIVGYVGQK…DKEFVVLTND (216 aa)) form the Glutamine amidotransferase type-2 domain. 2 SIS domains span residues 284-424 (ITKE…LKGS) and 453-600 (LIKE…VDKP). The active-site For Fru-6P isomerization activity is Lys-605.

Homodimer.

The protein resides in the cytoplasm. The enzyme catalyses D-fructose 6-phosphate + L-glutamine = D-glucosamine 6-phosphate + L-glutamate. Its function is as follows. Catalyzes the first step in hexosamine metabolism, converting fructose-6P into glucosamine-6P using glutamine as a nitrogen source. This Clostridium perfringens (strain 13 / Type A) protein is Glutamine--fructose-6-phosphate aminotransferase [isomerizing].